We begin with the raw amino-acid sequence, 340 residues long: Phenylalanine--tRNA ligase alpha subunit (340 aa).

Position 258 (Glu258) interacts with Mg(2+).

It belongs to the class-II aminoacyl-tRNA synthetase family. Phe-tRNA synthetase alpha subunit type 1 subfamily. In terms of assembly, tetramer of two alpha and two beta subunits. Requires Mg(2+) as cofactor.

Its subcellular location is the cytoplasm. It carries out the reaction tRNA(Phe) + L-phenylalanine + ATP = L-phenylalanyl-tRNA(Phe) + AMP + diphosphate + H(+). The sequence is that of Phenylalanine--tRNA ligase alpha subunit from Corynebacterium glutamicum (strain ATCC 13032 / DSM 20300 / JCM 1318 / BCRC 11384 / CCUG 27702 / LMG 3730 / NBRC 12168 / NCIMB 10025 / NRRL B-2784 / 534).